Here is a 470-residue protein sequence, read N- to C-terminus: UDP-glycosyltransferase 75C1 (470 aa).

The Proton acceptor role is filled by histidine 16. Position 16 (histidine 16) interacts with an anthocyanidin. Positions 347, 362, 365, 366, 367, 370, 386, and 387 each coordinate UDP-alpha-D-glucose.

It belongs to the UDP-glycosyltransferase family. As to expression, expressed in flowers and fruits, especially in pulp, and, at lower levels, in seeds.

It localises to the cytoplasm. The protein resides in the nucleus. It catalyses the reaction 2-cis-(+)-abscisate + UDP-alpha-D-glucose = beta-D-glucopyranosyl cis-(+)-abscisate + UDP. It carries out the reaction (indol-3-yl)acetate + UDP-alpha-D-glucose = 1-O-(indol-3-ylacetyl)-beta-D-glucose + UDP. Its function is as follows. Glucosyltransferase acting on both abscisic acid (ABA) and auxin (IAA). Required for ABA-mediated fruit ripening, seed germination, and negative responses to drought. The sequence is that of UDP-glycosyltransferase 75C1 from Solanum lycopersicum (Tomato).